We begin with the raw amino-acid sequence, 235 residues long: Uridylate kinase (235 aa).

ATP is bound at residue 9–12 (KLSG). The tract at residues 17 to 22 (GKDGYG) is involved in allosteric activation by GTP. Glycine 51 contacts UMP. Residues glycine 52 and arginine 56 each coordinate ATP. Residues aspartate 71 and 132–139 (TGNPYFTT) contribute to the UMP site. ATP is bound by residues threonine 159, tyrosine 165, and aspartate 168.

It belongs to the UMP kinase family. Homohexamer.

Its subcellular location is the cytoplasm. The catalysed reaction is UMP + ATP = UDP + ADP. The protein operates within pyrimidine metabolism; CTP biosynthesis via de novo pathway; UDP from UMP (UMPK route): step 1/1. With respect to regulation, allosterically activated by GTP. Inhibited by UTP. Its function is as follows. Catalyzes the reversible phosphorylation of UMP to UDP. The polypeptide is Uridylate kinase (Chlorobium luteolum (strain DSM 273 / BCRC 81028 / 2530) (Pelodictyon luteolum)).